The following is a 618-amino-acid chain: UvrABC system protein C (618 aa).

The 80-residue stretch at 13–92 (DKPGVYLMKN…IKKYRPKYNI (80 aa)) folds into the GIY-YIG domain. Residues 204-239 (LDIVENFKLNMERAAENLEFEKAAMLRDKINIIEKI) enclose the UVR domain.

It belongs to the UvrC family. In terms of assembly, interacts with UvrB in an incision complex.

The protein localises to the cytoplasm. Its function is as follows. The UvrABC repair system catalyzes the recognition and processing of DNA lesions. UvrC both incises the 5' and 3' sides of the lesion. The N-terminal half is responsible for the 3' incision and the C-terminal half is responsible for the 5' incision. In Clostridium botulinum (strain Langeland / NCTC 10281 / Type F), this protein is UvrABC system protein C.